Reading from the N-terminus, the 446-residue chain is Adenylosuccinate synthetase (446 aa).

GTP is bound by residues 20–26 and 48–50; these read GDEGKGK and GHT. The active-site Proton acceptor is the Asp21. Positions 21 and 48 each coordinate Mg(2+). Residues 21-24, 46-49, Thr137, Arg151, Gln232, Thr247, and Arg319 contribute to the IMP site; these read DEGK and NAGH. The active-site Proton donor is the His49. Position 315-321 (315-321) interacts with substrate; that stretch reads SVTGRPR. GTP contacts are provided by residues Arg321, 347–349, and 429–431; these read KLD and STG.

It belongs to the adenylosuccinate synthetase family. In terms of assembly, homodimer. The cofactor is Mg(2+).

The protein localises to the cytoplasm. It carries out the reaction IMP + L-aspartate + GTP = N(6)-(1,2-dicarboxyethyl)-AMP + GDP + phosphate + 2 H(+). It participates in purine metabolism; AMP biosynthesis via de novo pathway; AMP from IMP: step 1/2. Its function is as follows. Plays an important role in the de novo pathway of purine nucleotide biosynthesis. Catalyzes the first committed step in the biosynthesis of AMP from IMP. The protein is Adenylosuccinate synthetase of Ralstonia nicotianae (strain ATCC BAA-1114 / GMI1000) (Ralstonia solanacearum).